The chain runs to 890 residues: Alanine--tRNA ligase (890 aa).

Zn(2+) contacts are provided by H568, H572, C680, and H684.

It belongs to the class-II aminoacyl-tRNA synthetase family. It depends on Zn(2+) as a cofactor.

It localises to the cytoplasm. It catalyses the reaction tRNA(Ala) + L-alanine + ATP = L-alanyl-tRNA(Ala) + AMP + diphosphate. In terms of biological role, catalyzes the attachment of alanine to tRNA(Ala) in a two-step reaction: alanine is first activated by ATP to form Ala-AMP and then transferred to the acceptor end of tRNA(Ala). Also edits incorrectly charged Ser-tRNA(Ala) and Gly-tRNA(Ala) via its editing domain. The polypeptide is Alanine--tRNA ligase (Psychrobacter cryohalolentis (strain ATCC BAA-1226 / DSM 17306 / VKM B-2378 / K5)).